Reading from the N-terminus, the 194-residue chain is Imidazole glycerol phosphate synthase subunit HisH (194 aa).

Residues 3 to 194 form the Glutamine amidotransferase type-1 domain; that stretch reads RIAIVDLGIG…LILLRNFRRL (192 aa). C74 serves as the catalytic Nucleophile. Catalysis depends on residues H176 and E178.

Heterodimer of HisH and HisF.

Its subcellular location is the cytoplasm. It carries out the reaction 5-[(5-phospho-1-deoxy-D-ribulos-1-ylimino)methylamino]-1-(5-phospho-beta-D-ribosyl)imidazole-4-carboxamide + L-glutamine = D-erythro-1-(imidazol-4-yl)glycerol 3-phosphate + 5-amino-1-(5-phospho-beta-D-ribosyl)imidazole-4-carboxamide + L-glutamate + H(+). The catalysed reaction is L-glutamine + H2O = L-glutamate + NH4(+). It functions in the pathway amino-acid biosynthesis; L-histidine biosynthesis; L-histidine from 5-phospho-alpha-D-ribose 1-diphosphate: step 5/9. Its function is as follows. IGPS catalyzes the conversion of PRFAR and glutamine to IGP, AICAR and glutamate. The HisH subunit catalyzes the hydrolysis of glutamine to glutamate and ammonia as part of the synthesis of IGP and AICAR. The resulting ammonia molecule is channeled to the active site of HisF. The chain is Imidazole glycerol phosphate synthase subunit HisH from Pyrococcus furiosus (strain ATCC 43587 / DSM 3638 / JCM 8422 / Vc1).